A 180-amino-acid polypeptide reads, in one-letter code: ATP synthase subunit b, plastid (180 aa).

A helical membrane pass occupies residues 27-49 (LVTTLINIAVVLSLLIVFGKGFL).

This sequence belongs to the ATPase B chain family. In terms of assembly, F-type ATPases have 2 components, F(1) - the catalytic core - and F(0) - the membrane proton channel. F(1) has five subunits: alpha(3), beta(3), gamma(1), delta(1), epsilon(1). F(0) has four main subunits: a(1), b(1), b'(1) and c(10-14). The alpha and beta chains form an alternating ring which encloses part of the gamma chain. F(1) is attached to F(0) by a central stalk formed by the gamma and epsilon chains, while a peripheral stalk is formed by the delta, b and b' chains.

The protein localises to the plastid membrane. In terms of biological role, f(1)F(0) ATP synthase produces ATP from ADP in the presence of a proton or sodium gradient. F-type ATPases consist of two structural domains, F(1) containing the extramembraneous catalytic core and F(0) containing the membrane proton channel, linked together by a central stalk and a peripheral stalk. During catalysis, ATP synthesis in the catalytic domain of F(1) is coupled via a rotary mechanism of the central stalk subunits to proton translocation. Its function is as follows. Component of the F(0) channel, it forms part of the peripheral stalk, linking F(1) to F(0). The chain is ATP synthase subunit b, plastid from Cuscuta gronovii (Common dodder).